Here is a 242-residue protein sequence, read N- to C-terminus: Succinyl-CoA:3-ketoacid coenzyme A transferase subunit A (242 aa).

Position 33-39 (33-39 (GGFGLCG)) interacts with CoA.

This sequence belongs to the 3-oxoacid CoA-transferase subunit A family. As to quaternary structure, heterodimer of a subunit A and a subunit B.

The catalysed reaction is a 3-oxo acid + succinyl-CoA = a 3-oxoacyl-CoA + succinate. It participates in bacterial outer membrane biogenesis; lipopolysaccharide biosynthesis. The polypeptide is Succinyl-CoA:3-ketoacid coenzyme A transferase subunit A (lpsI) (Xanthomonas campestris pv. campestris (strain B100)).